A 176-amino-acid polypeptide reads, in one-letter code: Ribosome rescue factor SmrB (176 aa).

The Smr domain maps to leucine 98–glutamate 173.

It belongs to the SmrB family. As to quaternary structure, associates with collided ribosomes, but not with correctly translating polysomes.

In terms of biological role, acts as a ribosome collision sensor. Detects stalled/collided disomes (pairs of ribosomes where the leading ribosome is stalled and a second ribosome has collided with it) and endonucleolytically cleaves mRNA at the 5' boundary of the stalled ribosome. Stalled/collided disomes form a new interface (primarily via the 30S subunits) that binds SmrB. Cleaved mRNA becomes available for tmRNA ligation, leading to ribosomal subunit dissociation and rescue of stalled ribosomes. In Yersinia pseudotuberculosis serotype O:1b (strain IP 31758), this protein is Ribosome rescue factor SmrB.